Reading from the N-terminus, the 793-residue chain is uncharacterized protein (793 aa).

A signal peptide spans 1–21 (MLKKTLLAYTIGFAFSPPANA). The cysteines at positions 769 and 792 are disulfide-linked.

It belongs to the fimbrial export usher family.

The protein resides in the cell outer membrane. Functionally, involved in the export and assembly of a fimbrial subunit across the outer membrane. This is an uncharacterized protein from Escherichia coli (strain K12).